We begin with the raw amino-acid sequence, 354 residues long: Guanine nucleotide-binding protein G(i) subunit alpha-1 (354 aa).

Gly2 carries N-myristoyl glycine lipidation. A lipid anchor (S-palmitoyl cysteine) is attached at Cys3. The G-alpha domain maps to 32–354 (REVKLLLLGA…KNNLKDCGLF (323 aa)). A G1 motif region spans residues 35-48 (KLLLLGAGESGKST). Residues 43-48 (ESGKST), 150-151 (DS), and 175-178 (LRTR) contribute to the GTP site. Residue Ser47 coordinates Mg(2+). Residues 173 to 181 (DVLRTRVKT) form a G2 motif region. Thr181 contacts Mg(2+). The segment at 196-205 (FKMFDVGGQR) is G3 motif. Residues 200-204 (DVGGQ), 269-272 (NKKD), and Ala326 each bind GTP. The G4 motif stretch occupies residues 265–272 (ILFLNKKD). Residues 324-329 (TCATDT) form a G5 motif region.

This sequence belongs to the G-alpha family. G(i/o/t/z) subfamily. In terms of assembly, heterotrimeric G proteins are composed of 3 units; alpha, beta and gamma. The alpha chain contains the guanine nucleotide binding site. Part of a spindle orientation complex at least composed of GNAI1, GPSM2 and NUMA1. Identified in complex with the beta subunit GNB1 and the gamma subunit GNG1. Identified in complex with the beta subunit GNB1 and the gamma subunit GNG2. Component of the TAS2R14-GNAI1 complex, consisting of TAS2R14, GNAI1, GNB1 and GNG2; within the complex interacts with TAS2R14; this complex plays a role in the perception of bitterness. GTP binding causes dissociation of the heterotrimer, liberating the individual subunits so that they can interact with downstream effector proteins. Interacts (GDP-bound form) with GPSM1; this inhibits guanine nucleotide exchange and GTP binding. Interacts (GDP-bound form) with GPSM2 (via GoLoco domains); this inhibits guanine nucleotide exchange. Interacts with RGS10; this strongly enhances GTP hydrolysis. Interacts with RGS1 and RGS16; this strongly enhances GTPase activity. Interacts with RGS4. Interacts with RGS12. Interacts (via active GTP- or inactive GDP-bound forms) with RGS14 (via RGS and GoLoco domains). Interacts with RGS3, RGS6, RGS7, RGS8, RGS17, RGS18 and RGS20 (in vitro). Interacts (GDP-bound form) with RIC8A (via C-terminus); promoting GNAI1 folding and association with the plasma membrane. Interacts (inactive GDP-bound form) with NUCB1 (via GBA motif); the interaction leads to activation of GNAI1. Interacts (inactive GDP-bound form) with CCDC88C/DAPLE (via GBA motif); the interaction leads to activation of GNAI1. Interacts (inactive GDP-bound form) with CCDC8A/GIV (via GBA motif). Myristoylation at Gly-2 is required for membrane anchoring before palmitoylation. In terms of processing, palmitoylation at Cys-3 varies with membrane lipid composition.

The protein localises to the nucleus. It localises to the cytoplasm. Its subcellular location is the cell membrane. The protein resides in the cytoskeleton. It is found in the microtubule organizing center. The protein localises to the centrosome. It localises to the cell cortex. Its subcellular location is the membrane. The catalysed reaction is GTP + H2O = GDP + phosphate + H(+). In terms of biological role, guanine nucleotide-binding proteins (G proteins) function as transducers downstream of G protein-coupled receptors (GPCRs) in numerous signaling cascades. The alpha chain contains the guanine nucleotide binding site and alternates between an active, GTP-bound state and an inactive, GDP-bound state. Signaling by an activated GPCR promotes GDP release and GTP binding. The alpha subunit has a low GTPase activity that converts bound GTP to GDP, thereby terminating the signal. Both GDP release and GTP hydrolysis are modulated by numerous regulatory proteins. Signaling is mediated via effector proteins, such as adenylate cyclase. Inhibits adenylate cyclase activity of ADCY1, ADCY5 and ADCY6, leading to decreased intracellular cAMP levels. The inactive GDP-bound form prevents the association of RGS14 with centrosomes and is required for the translocation of RGS14 from the cytoplasm to the plasma membrane. Required for normal cytokinesis during mitosis. Required for cortical dynein-dynactin complex recruitment during metaphase. The chain is Guanine nucleotide-binding protein G(i) subunit alpha-1 (GNAI1) from Bos taurus (Bovine).